Consider the following 352-residue polypeptide: tRNA (guanine(26)-N(2))-dimethyltransferase (352 aa).

The Trm1 methyltransferase domain maps to 4–350; it reads ILNKEGAVEF…ANYDEIARIL (347 aa). Residues Arg-39, Arg-65, Asp-83, Asp-109, and Ala-110 each contribute to the S-adenosyl-L-methionine site.

The protein belongs to the class I-like SAM-binding methyltransferase superfamily. Trm1 family.

It catalyses the reaction guanosine(26) in tRNA + 2 S-adenosyl-L-methionine = N(2)-dimethylguanosine(26) in tRNA + 2 S-adenosyl-L-homocysteine + 2 H(+). Dimethylates a single guanine residue at position 26 of a number of tRNAs using S-adenosyl-L-methionine as donor of the methyl groups. The chain is tRNA (guanine(26)-N(2))-dimethyltransferase from Pyrobaculum islandicum (strain DSM 4184 / JCM 9189 / GEO3).